We begin with the raw amino-acid sequence, 153 residues long: ORM1-like protein 2 (153 aa).

Residues 1 to 21 (MNVGVAHSEVNPNTRVMNSRG) lie on the Cytoplasmic side of the membrane. The next 2 membrane-spanning stretches (helical) occupy residues 22–42 (IWLAYIILVGLLHVVLLSIPF) and 43–63 (FSIPVVWTLTNVIHNLVMYVF). Residues 64-105 (LHTVKGTPFETPDQGKARLLTHWEQMDYGLQFTSSRKFLSIS) are Cytoplasmic-facing. A helical membrane pass occupies residues 106–126 (PIVLYLLASFYTKYDAAHFLI). Residues 127–153 (NTASLLSVLLPKLPQFHGVRLFGINKY) are Extracellular-facing.

This sequence belongs to the ORM family. In terms of assembly, ceramide-sensitive subunit of the serine palmitoyltransferase (SPT) complex, which is also composed of SPTLC1, SPTLC2/3 and SPTSSA/B.

Its subcellular location is the endoplasmic reticulum membrane. Its function is as follows. Plays an essential role in the homeostatic regulation of sphingolipid de novo biosynthesis by modulating the activity of the serine palmitoyltransferase (SPT) in response to ceramide levels. When complexed to SPT, the binding of ceramides to its N-terminus stabilizes a conformation that block SPT substrate entry, hence preventing SPT catalytic activity. Through this mechanism, maintains ceramide levels at sufficient concentrations for the production of complex sphingolipids, but which prevents the accumulation of ceramides to levels that trigger apoptosis. The chain is ORM1-like protein 2 (ORMDL2) from Bos taurus (Bovine).